The following is a 118-amino-acid chain: Large ribosomal subunit protein uL18 (118 aa).

Residues 1–20 (MISKPDKNKKRQRRHARVRS) form a disordered region. The segment covering 7 to 20 (KNKKRQRRHARVRS) has biased composition (basic residues).

This sequence belongs to the universal ribosomal protein uL18 family. As to quaternary structure, part of the 50S ribosomal subunit; part of the 5S rRNA/L5/L18/L25 subcomplex. Contacts the 5S and 23S rRNAs.

This is one of the proteins that bind and probably mediate the attachment of the 5S RNA into the large ribosomal subunit, where it forms part of the central protuberance. The chain is Large ribosomal subunit protein uL18 from Pediococcus pentosaceus (strain ATCC 25745 / CCUG 21536 / LMG 10740 / 183-1w).